A 57-amino-acid polypeptide reads, in one-letter code: Putative antitoxin VapB4 (57 aa).

In terms of biological role, possibly the antitoxin component of a type II toxin-antitoxin (TA) system. Its cognate toxin is VapC4 (Potential). This chain is Putative antitoxin VapB4 (vapB4), found in Methanocaldococcus jannaschii (strain ATCC 43067 / DSM 2661 / JAL-1 / JCM 10045 / NBRC 100440) (Methanococcus jannaschii).